Consider the following 579-residue polypeptide: Zinc metalloproteinase nas-11 (579 aa).

The N-terminal stretch at 1 to 17 (MTPSLVFLIVVIVVVEG) is a signal peptide. The propeptide occupies 18-328 (QGWRPWDRFN…AAPGSSRLKK (311 aa)). The interval 35–58 (WGGNNWGTRQRNQEPHDIPPPVPP) is disordered. Asn-256 carries N-linked (GlcNAc...) asparagine glycosylation. A compositionally biased stretch (acidic residues) spans 293–312 (GDDEIPLPDADTDDEDDDDS). The tract at residues 293 to 323 (GDDEIPLPDADTDDEDDDDSTNSASGAAPGS) is disordered. The Peptidase M12A domain maps to 329–536 (SALYFEGNLI…IELLKKMYCQ (208 aa)). Intrachain disulfides connect Cys-375–Cys-535, Cys-401–Cys-421, Cys-539–Cys-575, Cys-546–Cys-568, and Cys-555–Cys-572. His-430 is a Zn(2+) binding site. Glu-431 is a catalytic residue. The Zn(2+) site is built by His-434 and His-440. The N-linked (GlcNAc...) asparagine glycan is linked to Asn-454. Residues 539 to 575 (CDDKNVYCGAWALKDLCKNPGHDQYMAANCKKSCGLC) form the ShKT domain.

Zn(2+) is required as a cofactor. Expressed in the anterior part of the intestine, CEP neurons and to a lesser extent in hypodermis.

It is found in the secreted. In terms of biological role, metalloprotease. This chain is Zinc metalloproteinase nas-11 (nas-11), found in Caenorhabditis elegans.